We begin with the raw amino-acid sequence, 391 residues long: Chaperone protein DnaJ (391 aa).

In terms of domain architecture, J spans 2 to 67 (DYYDVLGVSK…QKRESYDRYG (66 aa)). The segment at 148–226 (GVEKELLVSG…CRGQGRVKDK (79 aa)) adopts a CR-type zinc-finger fold. 8 residues coordinate Zn(2+): Cys-161, Cys-164, Cys-178, Cys-181, Cys-200, Cys-203, Cys-214, and Cys-217. CXXCXGXG motif repeat units lie at residues 161-168 (CTTCSGSG), 178-185 (CERCKGSG), 200-207 (CPECGGEG), and 214-221 (CSNCRGQG).

This sequence belongs to the DnaJ family. Homodimer. It depends on Zn(2+) as a cofactor.

Its subcellular location is the cytoplasm. In terms of biological role, participates actively in the response to hyperosmotic and heat shock by preventing the aggregation of stress-denatured proteins and by disaggregating proteins, also in an autonomous, DnaK-independent fashion. Unfolded proteins bind initially to DnaJ; upon interaction with the DnaJ-bound protein, DnaK hydrolyzes its bound ATP, resulting in the formation of a stable complex. GrpE releases ADP from DnaK; ATP binding to DnaK triggers the release of the substrate protein, thus completing the reaction cycle. Several rounds of ATP-dependent interactions between DnaJ, DnaK and GrpE are required for fully efficient folding. Also involved, together with DnaK and GrpE, in the DNA replication of plasmids through activation of initiation proteins. This chain is Chaperone protein DnaJ, found in Chlamydia felis (strain Fe/C-56) (Chlamydophila felis).